The chain runs to 623 residues: uncharacterized protein (623 aa).

Positions 24–51 (RALVQKDELAQASQDVEDMRDCYDSLLN) form a coiled coil. Disordered regions lie at residues 148-170 (TRQR…QQLQ), 240-343 (FSGL…TTPP), 362-393 (ALPT…TKAI), 454-531 (SFSG…LGYS), and 585-607 (KKLG…PQAL). Residues 243–259 (LEDDDGDDEIENNENDG) are compositionally biased toward acidic residues. Over residues 328–343 (VSQSAPLFPENRTTPP) the composition is skewed to polar residues. Positions 364 to 379 (PTPVETTRSPSSTTSP) are enriched in low complexity. Positions 384-393 (VGSSNPTKAI) are enriched in polar residues. The segment covering 484–495 (PVSKLPKVSSSP) has biased composition (low complexity). The segment covering 496 to 506 (TASPTFVSTPK) has biased composition (polar residues). Over residues 590-606 (PSPPLTPMSLIHPPPQA) the composition is skewed to pro residues.

This is an uncharacterized protein from Arabidopsis thaliana (Mouse-ear cress).